The chain runs to 349 residues: FK506-binding protein-like (349 aa).

Residue Thr3 is modified to Phosphothreonine. Residues 36 to 55 are disordered; sequence RQQPRDPPTETLELEVSPDP. TPR repeat units lie at residues 210–243, 252–285, and 286–319; these read AREERARGTELFRAGNPEGAARCYGRALRLLLTL, TVLHANLAACQLLLGQPQLAAQSCDRVLEREPGH, and LKALYRRGVAQAALGNLEKATADLKKVLAIDPKN.

Forms a ternary complex with CDKN1A/p21 and HSP90AB1/Hsp90. As to expression, ubiquitously expressed with higher levels in testis.

In terms of biological role, may be involved in response to X-ray. Regulates p21 protein stability by binding to Hsp90 and p21. This chain is FK506-binding protein-like (FKBPL), found in Homo sapiens (Human).